Consider the following 140-residue polypeptide: Prepilin peptidase-dependent protein A (140 aa).

Positions 1–23 are excised as a propeptide; sequence MLLLKASAICGKGNEGKRNKKGG. The residue at position 24 (Phe24) is an N-methylphenylalanine. The chain crosses the membrane as a helical span at residues 24 to 44; the sequence is FTLIELTVVLAIMAIILMVIA.

It is found in the membrane. Not yet known. This chain is Prepilin peptidase-dependent protein A (ppdA), found in Clostridium perfringens (strain 13 / Type A).